The sequence spans 24 residues: Ascaphin-6 (24 aa).

Expressed by the skin glands.

It is found in the secreted. Its function is as follows. Antimicrobial peptide that shows higher potency against Gram-negative bacteria than against Gram-positive bacteria. Has a very week hemolytic activity. The protein is Ascaphin-6 of Ascaphus truei (Coastal tailed frog).